The primary structure comprises 417 residues: 2-oxoglutarate and iron-dependent oxygenase JMJD4 (417 aa).

The JmjC domain occupies 142–301; it reads CRDFPVEDVF…NMWRFLQQEL (160 aa). Residues H189, D191, and H269 each contribute to the Fe cation site.

It belongs to the JMJD6 family. In terms of assembly, interacts with ETF1. Interacts with the ETF1-GSPT1 complex. The cofactor is Fe(2+).

The protein localises to the cytoplasm. The enzyme catalyses L-lysyl-[protein] + 2-oxoglutarate + O2 = 4-hydroxy-L-lysyl-[protein] + succinate + CO2. Catalyzes the 2-oxoglutarate and iron-dependent C4-lysyl hydroxylation of ETF1 at 'Lys-63' thereby promoting the translational termination efficiency of ETF1. This chain is 2-oxoglutarate and iron-dependent oxygenase JMJD4 (JMJD4), found in Homo sapiens (Human).